The chain runs to 265 residues: Putative carbamate hydrolase RutD (265 aa).

One can recognise an AB hydrolase-1 domain in the interval 14 to 123 (PTLVLSSGLG…WSSPNPHSAR (110 aa)).

It belongs to the AB hydrolase superfamily. Hydrolase RutD family.

The enzyme catalyses carbamate + 2 H(+) = NH4(+) + CO2. Its function is as follows. Involved in pyrimidine catabolism. May facilitate the hydrolysis of carbamate, a reaction that can also occur spontaneously. The chain is Putative carbamate hydrolase RutD from Stutzerimonas stutzeri (strain A1501) (Pseudomonas stutzeri).